Consider the following 94-residue polypeptide: Acylphosphatase (94 aa).

Residues 8 to 94 (RLTAWVHGRV…REQITGFHER (87 aa)) enclose the Acylphosphatase-like domain. Catalysis depends on residues Arg23 and Asn41.

This sequence belongs to the acylphosphatase family.

The catalysed reaction is an acyl phosphate + H2O = a carboxylate + phosphate + H(+). The chain is Acylphosphatase (acyP) from Mycobacterium sp. (strain JLS).